Consider the following 193-residue polypeptide: Dual-action ribosomal maturation protein DarP (193 aa).

Basic and acidic residues predominate over residues 1–10 (MRGRDEETGE). 2 disordered regions span residues 1–20 (MRGRDEETGEFRGASRSQQR) and 171–193 (QEQGLESGDSELEDGESASEDDE). Residues 178-193 (GDSELEDGESASEDDE) show a composition bias toward acidic residues.

Belongs to the DarP family.

The protein localises to the cytoplasm. Functionally, member of a network of 50S ribosomal subunit biogenesis factors which assembles along the 30S-50S interface, preventing incorrect 23S rRNA structures from forming. Promotes peptidyl transferase center (PTC) maturation. This chain is Dual-action ribosomal maturation protein DarP, found in Xanthomonas axonopodis pv. citri (strain 306).